A 125-amino-acid chain; its full sequence is Large ribosomal subunit protein bL20 (125 aa).

Belongs to the bacterial ribosomal protein bL20 family.

In terms of biological role, binds directly to 23S ribosomal RNA and is necessary for the in vitro assembly process of the 50S ribosomal subunit. It is not involved in the protein synthesizing functions of that subunit. The polypeptide is Large ribosomal subunit protein bL20 (Methylobacterium sp. (strain 4-46)).